A 628-amino-acid chain; its full sequence is uncharacterized protein (628 aa).

It belongs to the ATP-dependent AMP-binding enzyme family.

This is an uncharacterized protein from Pseudomonas aeruginosa (strain ATCC 15692 / DSM 22644 / CIP 104116 / JCM 14847 / LMG 12228 / 1C / PRS 101 / PAO1).